A 154-amino-acid polypeptide reads, in one-letter code: Isotocin-neurophysin IT 1 (154 aa).

An N-terminal signal peptide occupies residues 1-20 (MSGSMFSVFSLLYLLSVCSA). A disulfide bridge links cysteine 21 with cysteine 26. Glycine 29 is modified (glycine amide). Cystine bridges form between cysteine 42-cysteine 86, cysteine 45-cysteine 59, cysteine 53-cysteine 76, cysteine 60-cysteine 66, cysteine 93-cysteine 105, cysteine 99-cysteine 117, and cysteine 106-cysteine 111.

It belongs to the vasopressin/oxytocin family.

Its function is as follows. Isotocin causes contraction of smooth muscles. This chain is Isotocin-neurophysin IT 1, found in Catostomus commersonii (White sucker).